Reading from the N-terminus, the 651-residue chain is Polyadenylate-binding protein 1 (651 aa).

A compositionally biased stretch (low complexity) spans Met-1–Ala-27. The interval Met-1–Asp-42 is disordered. 4 RRM domains span residues Thr-47 to Arg-125, Gly-135 to Pro-211, Thr-227 to Lys-304, and Val-330 to Arg-407. Disordered stretches follow at residues Gln-481–Gln-554 and Gln-632–Ala-651. Over residues Ala-529 to Arg-540 the composition is skewed to pro residues. The PABC domain occupies Pro-555 to Gln-632. The span at Ala-636–Ala-651 shows a compositional bias: low complexity.

This sequence belongs to the polyadenylate-binding protein type-1 family. Part of large ribonucleoprotein complexes (mRNPs) containing RNA-binding proteins RRM4 and PAB1, endosome-binding protein UPA1, core scaffold protein UPA2 and associated factor GRP1. Interacts (via PABC domain) with UPA1 (via PAM2 domain). Interacts (via PABC domain) with UPA2 (via PAM2 domains).

It localises to the cytoplasm. It is found in the cytoskeleton. The protein resides in the endosome. In terms of biological role, RNA-binding protein involved in the formation of polar-growing hyphae which is essential for infection by the plant pathogen. Component of endosomal mRNA transport that regulates polarity of the infectious hyphae by transporting a broad spectrum of cargo mRNAs from the nucleus to cell poles. This chain is Polyadenylate-binding protein 1, found in Mycosarcoma maydis (Corn smut fungus).